Reading from the N-terminus, the 525-residue chain is Bifunctional purine biosynthesis protein PurH (525 aa).

One can recognise an MGS-like domain in the interval 1 to 147; sequence MTKIERALIS…KNWAHVAIVT (147 aa).

The protein belongs to the PurH family.

The catalysed reaction is (6R)-10-formyltetrahydrofolate + 5-amino-1-(5-phospho-beta-D-ribosyl)imidazole-4-carboxamide = 5-formamido-1-(5-phospho-D-ribosyl)imidazole-4-carboxamide + (6S)-5,6,7,8-tetrahydrofolate. The enzyme catalyses IMP + H2O = 5-formamido-1-(5-phospho-D-ribosyl)imidazole-4-carboxamide. The protein operates within purine metabolism; IMP biosynthesis via de novo pathway; 5-formamido-1-(5-phospho-D-ribosyl)imidazole-4-carboxamide from 5-amino-1-(5-phospho-D-ribosyl)imidazole-4-carboxamide (10-formyl THF route): step 1/1. It participates in purine metabolism; IMP biosynthesis via de novo pathway; IMP from 5-formamido-1-(5-phospho-D-ribosyl)imidazole-4-carboxamide: step 1/1. This is Bifunctional purine biosynthesis protein PurH from Chromobacterium violaceum (strain ATCC 12472 / DSM 30191 / JCM 1249 / CCUG 213 / NBRC 12614 / NCIMB 9131 / NCTC 9757 / MK).